Reading from the N-terminus, the 449-residue chain is tRNA-2-methylthio-N(6)-dimethylallyladenosine synthase (449 aa).

Residues 4–119 (RTFHIETFGC…APQALDRLVE (116 aa)) enclose the MTTase N-terminal domain. 6 residues coordinate [4Fe-4S] cluster: cysteine 13, cysteine 48, cysteine 82, cysteine 158, cysteine 162, and cysteine 165. Residues 144-375 (GAVPASVFVN…QTLQNRLTER (232 aa)) enclose the Radical SAM core domain. The region spanning 378–446 (QDMVGRKVEV…KHSLLAEQAG (69 aa)) is the TRAM domain.

It belongs to the methylthiotransferase family. MiaB subfamily. As to quaternary structure, monomer. Requires [4Fe-4S] cluster as cofactor.

Its subcellular location is the cytoplasm. It catalyses the reaction N(6)-dimethylallyladenosine(37) in tRNA + (sulfur carrier)-SH + AH2 + 2 S-adenosyl-L-methionine = 2-methylsulfanyl-N(6)-dimethylallyladenosine(37) in tRNA + (sulfur carrier)-H + 5'-deoxyadenosine + L-methionine + A + S-adenosyl-L-homocysteine + 2 H(+). Its function is as follows. Catalyzes the methylthiolation of N6-(dimethylallyl)adenosine (i(6)A), leading to the formation of 2-methylthio-N6-(dimethylallyl)adenosine (ms(2)i(6)A) at position 37 in tRNAs that read codons beginning with uridine. The polypeptide is tRNA-2-methylthio-N(6)-dimethylallyladenosine synthase (Nitratidesulfovibrio vulgaris (strain ATCC 29579 / DSM 644 / CCUG 34227 / NCIMB 8303 / VKM B-1760 / Hildenborough) (Desulfovibrio vulgaris)).